A 310-amino-acid chain; its full sequence is RING-H2 finger protein ATL60 (310 aa).

Residues 24 to 44 traverse the membrane as a helical segment; the sequence is VLLFSIVSIFTGILFLLLLHL. The segment at 120-162 adopts an RING-type; atypical zinc-finger fold; that stretch reads CAVCLSDLVDGDKARVLPRCNHGFHVDCIDMWFQSHSTCPLCR. 2 disordered regions span residues 170–201 and 240–260; these read DTTH…QDQS and GNFA…RSQE. Residues 179 to 201 are compositionally biased toward polar residues; it reads LPQNQNFESGHSTNQHNPSQDQS.

This sequence belongs to the RING-type zinc finger family. ATL subfamily.

The protein localises to the membrane. It catalyses the reaction S-ubiquitinyl-[E2 ubiquitin-conjugating enzyme]-L-cysteine + [acceptor protein]-L-lysine = [E2 ubiquitin-conjugating enzyme]-L-cysteine + N(6)-ubiquitinyl-[acceptor protein]-L-lysine.. It functions in the pathway protein modification; protein ubiquitination. This Arabidopsis thaliana (Mouse-ear cress) protein is RING-H2 finger protein ATL60 (ATL60).